A 241-amino-acid chain; its full sequence is Chloride intracellular channel protein 1 (241 aa).

Position 2 is an N-acetylalanine (Ala-2). The required for insertion into the membrane stretch occupies residues 2-90 (AEEQPQVELF…EEFLEAVLCP (89 aa)). Lys-13 is modified (N6-acetyllysine). Cys-24 provides a ligand contact to glutathione. Cys-24 carries the post-translational modification S-glutathionyl cysteine; alternate. The G-site signature appears at 24–27 (CPFS). Cys-24 and Cys-59 are oxidised to a cystine. Residues 26-46 (FSQRLFMVLWLKGVTFNVTTV) traverse the membrane as a helical segment. Residues Leu-64 and Thr-77 each contribute to the glutathione site. Positions 93 to 233 (YPKLAALNPE…PDDEEIELAY (141 aa)) constitute a GST C-terminal domain. Lys-119 carries the post-translational modification N6-acetyllysine. Ser-121 is subject to Phosphoserine. Lys-131 carries the N6-acetyllysine modification. A phosphoserine mark is found at Ser-156 and Ser-211. Residue Tyr-233 is modified to Phosphotyrosine.

The protein belongs to the chloride channel CLIC family. In terms of assembly, monomer. Homodimer (in vitro). Interacts with TRAPPC2. Dimerization requires a conformation change that leads to the exposure of a large hydrophobic surface. In vivo, this may lead to membrane insertion. Interacts with AKAP9. In terms of processing, hydrogen peroxide treatment causes a conformation change, leading to dimerization and formation of an intramolecular disulfide bond between Cys-24 and Cys-59. In terms of tissue distribution, expression is prominent in heart, placenta, liver, kidney and pancreas.

Its subcellular location is the nucleus. The protein localises to the nucleus membrane. It is found in the cytoplasm. It localises to the cell membrane. The protein resides in the endoplasmic reticulum. It catalyses the reaction L-dehydroascorbate + 2 glutathione = glutathione disulfide + L-ascorbate. The enzyme catalyses chloride(in) = chloride(out). It carries out the reaction iodide(out) = iodide(in). The catalysed reaction is thiocyanate(in) = thiocyanate(out). It catalyses the reaction nitrate(in) = nitrate(out). The enzyme catalyses bromide(in) = bromide(out). It carries out the reaction fluoride(in) = fluoride(out). With respect to regulation, the oxidoreductase activity is inhibited by rapamycin, amphotericin B and IAA-94. The channel conductance is regulated by pH and redox membrane potential. Inhibited by IAA-94. Its function is as follows. In the soluble state, catalyzes glutaredoxin-like thiol disulfide exchange reactions with reduced glutathione as electron donor. Reduces selenite and dehydroascorbate and may act as an antioxidant during oxidative stress response. Can insert into membranes and form voltage-dependent multi-ion conductive channels. Membrane insertion seems to be redox-regulated and may occur only under oxidizing conditions. Involved in regulation of the cell cycle. This chain is Chloride intracellular channel protein 1, found in Homo sapiens (Human).